A 350-amino-acid polypeptide reads, in one-letter code: Ribosomal RNA small subunit methyltransferase C (350 aa).

The protein belongs to the methyltransferase superfamily. RsmC family. As to quaternary structure, monomer.

It is found in the cytoplasm. It carries out the reaction guanosine(1207) in 16S rRNA + S-adenosyl-L-methionine = N(2)-methylguanosine(1207) in 16S rRNA + S-adenosyl-L-homocysteine + H(+). Its function is as follows. Specifically methylates the guanine in position 1207 of 16S rRNA in the 30S particle. This is Ribosomal RNA small subunit methyltransferase C from Sodalis glossinidius (strain morsitans).